We begin with the raw amino-acid sequence, 140 residues long: Ribonuclease P protein component (140 aa).

It belongs to the RnpA family. In terms of assembly, consists of a catalytic RNA component (M1 or rnpB) and a protein subunit.

The enzyme catalyses Endonucleolytic cleavage of RNA, removing 5'-extranucleotides from tRNA precursor.. Functionally, RNaseP catalyzes the removal of the 5'-leader sequence from pre-tRNA to produce the mature 5'-terminus. It can also cleave other RNA substrates such as 4.5S RNA. The protein component plays an auxiliary but essential role in vivo by binding to the 5'-leader sequence and broadening the substrate specificity of the ribozyme. The polypeptide is Ribonuclease P protein component (Nostoc sp. (strain PCC 7120 / SAG 25.82 / UTEX 2576)).